The chain runs to 381 residues: Heme A synthase (381 aa).

The tract at residues methionine 1 to glycine 23 is disordered. Positions threonine 11–glycine 23 are enriched in low complexity. 8 helical membrane-spanning segments follow: residues glycine 34–glycine 54, arginine 120–threonine 140, leucine 151–serine 171, leucine 185–alanine 205, threonine 228–isoleucine 248, leucine 285–phenylalanine 305, alanine 319–leucine 339, and serine 342–leucine 362. Histidine 290 contributes to the heme binding site. Residue histidine 350 coordinates heme.

Belongs to the COX15/CtaA family. Type 2 subfamily. In terms of assembly, interacts with CtaB. Heme b serves as cofactor.

The protein resides in the cell membrane. It carries out the reaction Fe(II)-heme o + 2 A + H2O = Fe(II)-heme a + 2 AH2. It functions in the pathway porphyrin-containing compound metabolism; heme A biosynthesis; heme A from heme O: step 1/1. Catalyzes the conversion of heme O to heme A by two successive hydroxylations of the methyl group at C8. The first hydroxylation forms heme I, the second hydroxylation results in an unstable dihydroxymethyl group, which spontaneously dehydrates, resulting in the formyl group of heme A. This Paracoccus denitrificans (strain Pd 1222) protein is Heme A synthase.